The primary structure comprises 922 residues: Probable outer membrane protein pmp1 (922 aa).

The signal sequence occupies residues Met-1–Ala-26. The Autotransporter domain maps to Ser-620 to Phe-922.

The protein belongs to the PMP outer membrane protein family.

It is found in the secreted. The protein resides in the cell wall. The protein localises to the cell outer membrane. This Chlamydia pneumoniae (Chlamydophila pneumoniae) protein is Probable outer membrane protein pmp1 (pmp1).